The primary structure comprises 564 residues: Aspyridones efflux protein (564 aa).

A compositionally biased stretch (low complexity) spans 1-17 (MHPDQADTAAMQQQTTT). A disordered region spans residues 1–49 (MHPDQADTAAMQQQTTTECSDRSRPEKAEEGHAREHTVTRTCSREPEQT). The span at 19 to 47 (CSDRSRPEKAEEGHAREHTVTRTCSREPE) shows a compositional bias: basic and acidic residues. Helical transmembrane passes span 66–86 (AICLTIFLISVDFSILATAIP), 127–147 (WTFLLALLTFEVGSIICATAP), 158–178 (IAGCGNAGLLSGALLILTHSV), 185–205 (LFMAMTGGTYGVAAIAGPPLG), 216–236 (WCFWINLPIGALTFLVIVFLF), 260–280 (VGTLMFMPAIICVLLALQWGG), 287–307 (SGIVVALLVVGGVLVIAFGIV), 335–355 (FALGAAFFVFIYFLPIWFQGV), 368–388 (LPMLVGNIVATAVSGVLVTII), and 392–412 (APFMILGTILASVGAGLLLLF). Asparagine 415 is a glycosylation site (N-linked (GlcNAc...) asparagine). The next 2 membrane-spanning stretches (helical) occupy residues 416–436 (VTAASWIGYQAIVGLGIGFGW) and 454–474 (IATATLSFAQTLGGTLFVSVA). An N-linked (GlcNAc...) asparagine glycan is attached at asparagine 524. Residues 528–548 (LSAFFVATIMAIMSLVGCTFV) traverse the membrane as a helical segment.

It belongs to the major facilitator superfamily. TCR/Tet family.

The protein resides in the cell membrane. Efflux pump that may be involved in the secretion of leporins. The sequence is that of Aspyridones efflux protein (TP) from Neocamarosporium betae (Beet black rot fungus).